The chain runs to 396 residues: L-lactate dehydrogenase (396 aa).

In terms of domain architecture, FMN hydroxy acid dehydrogenase spans 1–380 (MIISAASDYR…TQDSLVQGLG (380 aa)). Y24 serves as a coordination point for substrate. S106 and Q127 together coordinate FMN. Y129 lines the substrate pocket. T155 is an FMN binding site. A substrate-binding site is contributed by R164. K251 contributes to the FMN binding site. H275 acts as the Proton acceptor in catalysis. R278 is a binding site for substrate. Residue 306–330 (DSGIRNGLDVVRMIALGADTVLLGR) participates in FMN binding.

It belongs to the FMN-dependent alpha-hydroxy acid dehydrogenase family. Requires FMN as cofactor.

The protein localises to the cell inner membrane. The catalysed reaction is (S)-lactate + A = pyruvate + AH2. Catalyzes the conversion of L-lactate to pyruvate. Is coupled to the respiratory chain. In Escherichia coli O127:H6 (strain E2348/69 / EPEC), this protein is L-lactate dehydrogenase.